Here is a 548-residue protein sequence, read N- to C-terminus: SH2/SH3 adapter protein dreadlocks (548 aa).

Disordered regions lie at residues 12-37 (IPDS…QHQN), 57-92 (QVPV…TASS), and 113-146 (GSGS…MKHG). Low complexity predominate over residues 20–37 (QQYPQQQQHPPQLPQHQN). Residues 113–122 (GSGSANGSGS) show a composition bias toward gly residues. Low complexity predominate over residues 123–135 (GNSSSGSAAGNAG). Positions 150–209 (DDVCYVVAKYDYAAQGAQELDLRKNERYLLLDDSKHWWRVQNSRNQSGYVPSNYVKKEKP) constitute an SH3 1 domain. The tract at residues 219 to 247 (VKKGSGSKTLPNCSPSRQVESPTMSRRLP) is disordered. Over residues 227 to 242 (TLPNCSPSRQVESPTM) the composition is skewed to polar residues. SH3 domains lie at 252–311 (EAIG…EDCD) and 324–386 (NVLD…ELND). Residues 398–442 (SAGNGNGGGSNGGAGGGGGNDSMERRNEGNKPAAQSSGQPIERPN) are disordered. Over residues 401-417 (NGNGGGSNGGAGGGGGN) the composition is skewed to gly residues. The SH2 domain maps to 448 to 542 (WYYGAITRSQ…GEKLYLVRSL (95 aa)).

In terms of assembly, interacts (via SH2 and SH3 domains) with Dscam1 (via cytoplasmic domain); the interaction is direct and requires Dscam1 to be phosphorylated. Interacts (via SH2 and SH3 domains) with InR/Insulin-like receptor (via C-terminal cytoplasmic region); the interaction requires InR kinase activity, probably for autophosphorylation stimulated by insulin signaling. Interacts with Ptp61F (via C-terminus); this interaction is independent of insulin stimulation. Interacts (via SH3 domain 2) with Pak (via N-terminal PXXP motif). Post-translationally, phosphorylated by Src42A and possibly by other tyrosine kinases. Constitutively dephosphorylated by its binding partner Ptp61F.

It is found in the perikaryon. It localises to the cell projection. The protein resides in the axon. Its subcellular location is the growth cone. Its function is as follows. Adapter protein that links cell surface receptor tyrosine phosphorylation to downstream signaling pathways and effectors, many of which are involved in regulation of the actin cytoskeleton. Recruited by Dscam1/Down syndrome cell adhesion molecule homolog and InR/insulin-like receptor. Recruits Pak to membranes, probably when dock/dreadlocks is associated with activated receptors. Required for guidance and targeting of photoreceptor (R cell) axon projections but not for axon outgrowth, differentiation or target induction in the developing eye. As part of a signaling pathway that involves the lbm/late bloomer protein, involved in synapse formation of the RP3 motorneuron at the muscle 7/6 cleft, probably by stimulating axon defasciculation from other SNb neurons. The sequence is that of SH2/SH3 adapter protein dreadlocks from Drosophila melanogaster (Fruit fly).